The primary structure comprises 192 residues: Akirin-1 (192 aa).

Positions 17-71 (LLSPGSPKRRRCAPLPGPTPGLRPPDAEPPPPFQTQTPPQSLQQPAPPGSERRLP) are disordered. The residue at position 22 (S22) is a Phosphoserine. Residues 23-28 (PKRRRC) carry the Nuclear localization signal motif. A compositionally biased stretch (pro residues) spans 31–49 (LPGPTPGLRPPDAEPPPPF). Over residues 50–60 (QTQTPPQSLQQ) the composition is skewed to low complexity. T72 is modified (phosphothreonine). Polar residues predominate over residues 104 to 122 (ASESQPHSSALTAPSSPGS). The tract at residues 104–127 (ASESQPHSSALTAPSSPGSSWMKK) is disordered. The SYVS motif signature appears at 189-192 (SYVS).

It belongs to the akirin family. Widely expressed with the highest expression in heart, liver, placenta and peripheral blood leukocytes.

The protein resides in the nucleus. In terms of biological role, molecular adapter that acts as a bridge between proteins, and which is involved skeletal muscle development. Functions as a signal transducer for MSTN during skeletal muscle regeneration and myogenesis. May regulate chemotaxis of both macrophages and myoblasts by reorganising actin cytoskeleton, leading to more efficient lamellipodia formation via a PI3 kinase dependent pathway. In contrast to AKIRIN2, not involved in nuclear import of proteasomes. The protein is Akirin-1 of Homo sapiens (Human).